A 212-amino-acid polypeptide reads, in one-letter code: Uridine kinase (212 aa).

13–20 is a binding site for ATP; it reads GASASGKS.

It belongs to the uridine kinase family.

It is found in the cytoplasm. It catalyses the reaction uridine + ATP = UMP + ADP + H(+). It carries out the reaction cytidine + ATP = CMP + ADP + H(+). The protein operates within pyrimidine metabolism; CTP biosynthesis via salvage pathway; CTP from cytidine: step 1/3. Its pathway is pyrimidine metabolism; UMP biosynthesis via salvage pathway; UMP from uridine: step 1/1. The protein is Uridine kinase of Psychromonas ingrahamii (strain DSM 17664 / CCUG 51855 / 37).